Reading from the N-terminus, the 285-residue chain is 2-dehydro-3-deoxyphosphooctonate aldolase (285 aa).

Belongs to the KdsA family.

The protein resides in the cytoplasm. It catalyses the reaction D-arabinose 5-phosphate + phosphoenolpyruvate + H2O = 3-deoxy-alpha-D-manno-2-octulosonate-8-phosphate + phosphate. The protein operates within carbohydrate biosynthesis; 3-deoxy-D-manno-octulosonate biosynthesis; 3-deoxy-D-manno-octulosonate from D-ribulose 5-phosphate: step 2/3. Its pathway is bacterial outer membrane biogenesis; lipopolysaccharide biosynthesis. The chain is 2-dehydro-3-deoxyphosphooctonate aldolase from Polaromonas naphthalenivorans (strain CJ2).